The chain runs to 100 residues: Small ribosomal subunit protein uS14c (100 aa).

Belongs to the universal ribosomal protein uS14 family. As to quaternary structure, part of the 30S ribosomal subunit.

It is found in the plastid. The protein resides in the cyanelle. Functionally, binds 16S rRNA, required for the assembly of 30S particles. The sequence is that of Small ribosomal subunit protein uS14c from Cyanophora paradoxa.